The primary structure comprises 380 residues: Cytochrome b (380 aa).

Transmembrane regions (helical) follow at residues 34-54 (FGSL…LLAM), 78-99 (WLIR…YLHI), 114-134 (WNTG…GYVL), and 179-199 (FFAL…IHLT). His84 and His98 together coordinate heme b. Residues His183 and His197 each coordinate heme b. Position 202 (His202) interacts with a ubiquinone. Transmembrane regions (helical) follow at residues 227–247 (LKDI…ALFS), 289–309 (LGGV…PLLH), 321–341 (LSQL…WVGS), and 348–368 (FIII…ILLP).

Belongs to the cytochrome b family. The cytochrome bc1 complex contains 11 subunits: 3 respiratory subunits (MT-CYB, CYC1 and UQCRFS1), 2 core proteins (UQCRC1 and UQCRC2) and 6 low-molecular weight proteins (UQCRH/QCR6, UQCRB/QCR7, UQCRQ/QCR8, UQCR10/QCR9, UQCR11/QCR10 and a cleavage product of UQCRFS1). This cytochrome bc1 complex then forms a dimer. Heme b serves as cofactor.

Its subcellular location is the mitochondrion inner membrane. Its function is as follows. Component of the ubiquinol-cytochrome c reductase complex (complex III or cytochrome b-c1 complex) that is part of the mitochondrial respiratory chain. The b-c1 complex mediates electron transfer from ubiquinol to cytochrome c. Contributes to the generation of a proton gradient across the mitochondrial membrane that is then used for ATP synthesis. This chain is Cytochrome b (MT-CYB), found in Pelagodroma marina (White-faced storm-petrel).